We begin with the raw amino-acid sequence, 122 residues long: UPF0382 membrane protein SAUSA300_0565 (122 aa).

4 helical membrane-spanning segments follow: residues 3–23 (LFII…AFGA), 46–66 (MYHG…SINV), 69–89 (AGWL…ILVL), and 98–118 (ITPI…IATF).

This sequence belongs to the UPF0382 family.

The protein resides in the cell membrane. The chain is UPF0382 membrane protein SAUSA300_0565 from Staphylococcus aureus (strain USA300).